The following is a 596-amino-acid chain: Probable tripeptidyl-peptidase SED2 (596 aa).

An N-terminal signal peptide occupies residues 1-16; the sequence is MRLLKFVCLLASVAAA. Positions 17 to 203 are cleaved as a propeptide — removed in mature form; it reads KPTPGASHKV…LESMSVEEFA (187 aa). In terms of domain architecture, Peptidase S53 spans 210 to 596; that stretch reads LVTTACLREL…NFQALTKVLP (387 aa). Asn265 carries N-linked (GlcNAc...) asparagine glycosylation. Catalysis depends on charge relay system residues Glu286 and Asp290. The N-linked (GlcNAc...) asparagine glycan is linked to Asn403. Ser501 acts as the Charge relay system in catalysis. 2 residues coordinate Ca(2+): Asp543 and Ile544. The N-linked (GlcNAc...) asparagine glycan is linked to Asn572. Ca(2+) contacts are provided by Gly576 and Asp578.

Ca(2+) is required as a cofactor.

It is found in the secreted. It localises to the extracellular space. It carries out the reaction Release of an N-terminal tripeptide from a polypeptide.. Secreted tripeptidyl-peptidase which degrades proteins at acidic pHs and is involved in virulence. The polypeptide is Probable tripeptidyl-peptidase SED2 (SED2) (Trichophyton verrucosum (strain HKI 0517)).